Consider the following 37-residue polypeptide: Lambda-hexatoxin-Hf1a (37 aa).

4 disulfides stabilise this stretch: C4/C18, C11/C23, C14/C15, and C17/C34.

It belongs to the neurotoxin 11 (kappa toxin) family. Expressed by the venom gland.

The protein resides in the secreted. Functionally, this excitatory toxin inhibits insect calcium-activated potassium (KCa) channels (Slo-type). The chain is Lambda-hexatoxin-Hf1a from Hadronyche formidabilis (Northern tree funnel-web spider).